Here is an 822-residue protein sequence, read N- to C-terminus: Fibroblast growth factor receptor 1 (822 aa).

Positions Met-1 to Ala-21 are cleaved as a signal peptide. Topologically, residues Arg-22–Glu-376 are extracellular. An Ig-like C2-type 1 domain is found at Pro-25 to Ser-119. Cys-55 and Cys-101 are disulfide-bonded. N-linked (GlcNAc...) asparagine glycosylation is found at Asn-77 and Asn-117. Positions Asp-120–Glu-162 are disordered. A compositionally biased stretch (acidic residues) spans Ser-125–Ser-135. The segment covering Ser-136–Lys-145 has biased composition (basic and acidic residues). Ig-like C2-type domains follow at residues Pro-158–Asp-246 and Pro-255–Thr-357. Positions Lys-160–Lys-177 are heparin-binding. An intrachain disulfide couples Cys-178 to Cys-230. Asn-227, Asn-240, Asn-264, Asn-296, Asn-317, and Asn-330 each carry an N-linked (GlcNAc...) asparagine glycan. Cysteines 277 and 341 form a disulfide. The chain crosses the membrane as a helical span at residues Ile-377–Tyr-397. Residues Lys-398–Arg-822 are Cytoplasmic-facing. Tyr-463 bears the Phosphotyrosine; by autocatalysis mark. In terms of domain architecture, Protein kinase spans Leu-478–Leu-767. Residues Leu-484–Gly-490, Lys-514, Glu-562–Ala-564, and Asn-568 contribute to the ATP site. Residues Tyr-583 and Tyr-585 each carry the phosphotyrosine; by autocatalysis modification. Residue Asp-623 is the Proton acceptor of the active site. Residues Arg-627 and Asp-641 each coordinate ATP. Tyr-653, Tyr-654, Tyr-730, and Tyr-766 each carry phosphotyrosine; by autocatalysis. Residues Asp-782 to Glu-792 show a composition bias toward polar residues. The interval Asp-782–Arg-822 is disordered.

This sequence belongs to the protein kinase superfamily. Tyr protein kinase family. Fibroblast growth factor receptor subfamily. Monomer. Homodimer after ligand binding. Interacts predominantly with FGF1 and FGF2, but can also interact with FGF3, FGF4, FGF5, FGF6, FGF8, FGF10, FGF19, FGF21, FGF22 and FGF23 (in vitro). Ligand specificity is determined by tissue-specific expression of isoforms, and differences in the third Ig-like domain are crucial for ligand specificity. Affinity for fibroblast growth factors (FGFs) is increased by heparan sulfate glycosaminoglycans that function as coreceptors. Likewise, KLB increases the affinity for FGF19, FGF21 and FGF23. Interacts (phosphorylated on Tyr-766) with PLCG1 (via SH2 domains). Interacts with FRS2. Interacts with RPS6KA1. Interacts (via C-terminus) with NEDD4 (via WW3 domain). Interacts with KL. Interacts with SHB (via SH2 domain). Interacts with GRB10. Interacts with ANOS1; this interaction does not interfere with FGF2-binding to FGFR1, but prevents binding of heparin-bound FGF2. Interacts with SOX2 and SOX3. Interacts with FLRT1, FLRT2 and FLRT3. Found in a ternary complex with FGF1 and ITGAV:ITGB3. Post-translationally, autophosphorylated. Binding of FGF family members together with heparan sulfate proteoglycan or heparin promotes receptor dimerization and autophosphorylation on tyrosine residues. Autophosphorylation occurs in trans between the two FGFR molecules present in the dimer and proceeds in a highly ordered manner. Initial autophosphorylation at Tyr-653 increases the kinase activity by a factor of 50 to 100. After this, Tyr-583 becomes phosphorylated, followed by phosphorylation of Tyr-463, Tyr-766, Tyr-583 and Tyr-585. In a third stage, Tyr-654 is autophosphorylated, resulting in a further tenfold increase of kinase activity. Phosphotyrosine residues provide docking sites for interacting proteins and so are crucial for FGFR1 function and its regulation. Ubiquitinated. FGFR1 is rapidly ubiquitinated by NEDD4 after autophosphorylation, leading to internalization and lysosomal degradation. CBL is recruited to activated FGFR1 via FRS2 and GRB2, and mediates ubiquitination and subsequent degradation of FGFR1. In terms of processing, N-glycosylated in the endoplasmic reticulum. The N-glycan chains undergo further maturation to an Endo H-resistant form in the Golgi apparatus. As to expression, widely expressed.

The protein localises to the cell membrane. It localises to the nucleus. The protein resides in the cytoplasm. Its subcellular location is the cytosol. It is found in the cytoplasmic vesicle. It carries out the reaction L-tyrosyl-[protein] + ATP = O-phospho-L-tyrosyl-[protein] + ADP + H(+). With respect to regulation, present in an inactive conformation in the absence of bound ligand. Ligand binding leads to dimerization and activation by sequential autophosphorylation on tyrosine residues. Functionally, tyrosine-protein kinase that acts as a cell-surface receptor for fibroblast growth factors and plays an essential role in the regulation of embryonic development, cell proliferation, differentiation and migration. Required for normal mesoderm patterning and correct axial organization during embryonic development, normal skeletogenesis and normal development of the gonadotropin-releasing hormone (GnRH) neuronal system. Phosphorylates PLCG1, FRS2, GAB1 and SHB. Ligand binding leads to the activation of several signaling cascades. Activation of PLCG1 leads to the production of the cellular signaling molecules diacylglycerol and inositol 1,4,5-trisphosphate. Phosphorylation of FRS2 triggers recruitment of GRB2, GAB1, PIK3R1 and SOS1, and mediates activation of RAS, MAPK1/ERK2, MAPK3/ERK1 and the MAP kinase signaling pathway, as well as of the AKT1 signaling pathway. Promotes phosphorylation of SHC1, STAT1 and PTPN11/SHP2. In the nucleus, enhances RPS6KA1 and CREB1 activity and contributes to the regulation of transcription. FGFR1 signaling is down-regulated by IL17RD/SEF, and by FGFR1 ubiquitination, internalization and degradation. This Mus musculus (Mouse) protein is Fibroblast growth factor receptor 1 (Fgfr1).